Reading from the N-terminus, the 185-residue chain is Threonylcarbamoyl-AMP synthase (185 aa).

A YrdC-like domain is found at 5–185 (ADRIADAVAA…DLQSGETLRR (181 aa)).

It belongs to the SUA5 family. TsaC subfamily.

Its subcellular location is the cytoplasm. It catalyses the reaction L-threonine + hydrogencarbonate + ATP = L-threonylcarbamoyladenylate + diphosphate + H2O. Functionally, required for the formation of a threonylcarbamoyl group on adenosine at position 37 (t(6)A37) in tRNAs that read codons beginning with adenine. Catalyzes the conversion of L-threonine, HCO(3)(-)/CO(2) and ATP to give threonylcarbamoyl-AMP (TC-AMP) as the acyladenylate intermediate, with the release of diphosphate. This Chromohalobacter salexigens (strain ATCC BAA-138 / DSM 3043 / CIP 106854 / NCIMB 13768 / 1H11) protein is Threonylcarbamoyl-AMP synthase.